Consider the following 186-residue polypeptide: Probable peptidoglycan L,D-endopeptidase MepK (186 aa).

The N-terminal stretch at 1–30 is a signal peptide; sequence MNYVDQNKRKWLSLGGIALGISILPNSVLA. Residues H134, D141, and H174 each coordinate Zn(2+).

Belongs to the peptidase M15 family. The cofactor is Zn(2+).

The protein operates within cell wall biogenesis; cell wall polysaccharide biosynthesis. Its function is as follows. L,D-endopeptidase that cleaves meso-diaminopimelic acid (mDAP)-mDAP cross-links in peptidoglycan. It works in conjunction with other elongation-specific D,D-endopeptidases to make space for efficient incorporation of nascent peptidoglycan strands into the sacculus and thus enable cell wall expansion. In Haemophilus influenzae (strain ATCC 51907 / DSM 11121 / KW20 / Rd), this protein is Probable peptidoglycan L,D-endopeptidase MepK.